The sequence spans 213 residues: Orotate phosphoribosyltransferase (213 aa).

Lys-25 is a binding site for 5-phospho-alpha-D-ribose 1-diphosphate. Position 33 to 34 (33 to 34 (FF)) interacts with orotate. Residues 71–72 (YK), Arg-98, Lys-99, Lys-102, His-104, and 124–132 (DDVITSGTA) contribute to the 5-phospho-alpha-D-ribose 1-diphosphate site. Residues Thr-128 and Arg-156 each contribute to the orotate site.

The protein belongs to the purine/pyrimidine phosphoribosyltransferase family. PyrE subfamily. Homodimer. It depends on Mg(2+) as a cofactor.

The enzyme catalyses orotidine 5'-phosphate + diphosphate = orotate + 5-phospho-alpha-D-ribose 1-diphosphate. It participates in pyrimidine metabolism; UMP biosynthesis via de novo pathway; UMP from orotate: step 1/2. Its function is as follows. Catalyzes the transfer of a ribosyl phosphate group from 5-phosphoribose 1-diphosphate to orotate, leading to the formation of orotidine monophosphate (OMP). The polypeptide is Orotate phosphoribosyltransferase (Buchnera aphidicola subsp. Acyrthosiphon pisum (strain 5A)).